Reading from the N-terminus, the 306-residue chain is Elongation factor Ts (306 aa).

The interval 79–82 is involved in Mg(2+) ion dislocation from EF-Tu; that stretch reads TDFV.

Belongs to the EF-Ts family.

It localises to the cytoplasm. Its function is as follows. Associates with the EF-Tu.GDP complex and induces the exchange of GDP to GTP. It remains bound to the aminoacyl-tRNA.EF-Tu.GTP complex up to the GTP hydrolysis stage on the ribosome. The chain is Elongation factor Ts from Mesorhizobium japonicum (strain LMG 29417 / CECT 9101 / MAFF 303099) (Mesorhizobium loti (strain MAFF 303099)).